Here is a 104-residue protein sequence, read N- to C-terminus: Phosphate metabolism protein 6 (104 aa).

A helical transmembrane segment spans residues 76-96 (IIVIIIVLLLYSLTMVGLFYV).

It localises to the vacuole membrane. The chain is Phosphate metabolism protein 6 (PHM6) from Saccharomyces cerevisiae (strain ATCC 204508 / S288c) (Baker's yeast).